The chain runs to 243 residues: DUF724 domain-containing protein 5 (243 aa).

Residues 1-24 (MREKHYSEDNSRKRKRGELEHNSD) are compositionally biased toward basic and acidic residues. The segment at 1 to 51 (MREKHYSEDNSRKRKRGELEHNSDLNETVLPSDWTPDPVKNFAADDDDEET) is disordered. Residues 59 to 243 (VLPFVKKSPV…DLGVELEDVE (185 aa)) form the DUF724 domain. Positions 174–223 (KEMKDESSKKHKAEQEFGEMERKILEVKNKVLELQKQEAALEKQKDATYE) form a coiled coil.

In terms of assembly, homodimer. In terms of tissue distribution, expressed in leaves, flowers and siliques.

The protein resides in the nucleus. May be involved in the polar growth of plant cells via transportation of RNAs. The sequence is that of DUF724 domain-containing protein 5 from Arabidopsis thaliana (Mouse-ear cress).